We begin with the raw amino-acid sequence, 389 residues long: 3-ketoacyl-CoA thiolase (389 aa).

The active-site Acyl-thioester intermediate is the cysteine 91. Residues histidine 343 and cysteine 373 each act as proton acceptor in the active site.

The protein belongs to the thiolase-like superfamily. Thiolase family. As to quaternary structure, heterotetramer of two alpha chains (FadB) and two beta chains (FadA).

The protein resides in the cytoplasm. It catalyses the reaction an acyl-CoA + acetyl-CoA = a 3-oxoacyl-CoA + CoA. It participates in lipid metabolism; fatty acid beta-oxidation. Catalyzes the final step of fatty acid oxidation in which acetyl-CoA is released and the CoA ester of a fatty acid two carbons shorter is formed. The polypeptide is 3-ketoacyl-CoA thiolase (Pseudoalteromonas translucida (strain TAC 125)).